We begin with the raw amino-acid sequence, 454 residues long: UPF0210 protein BL1209 (454 aa).

This sequence belongs to the UPF0210 family. As to quaternary structure, homodimer.

The polypeptide is UPF0210 protein BL1209 (Bifidobacterium longum (strain NCC 2705)).